Consider the following 21-residue polypeptide: Natriuretic peptide TsNP (21 aa).

The cysteines at positions 5 and 21 are disulfide-linked.

As to expression, expressed by the venom gland.

The protein resides in the secreted. Scorpion venom natriuretic peptide that increases the perfusion pressure, glomerular filtration rate and urinary flow in the isolated perfused rat kidney assay. Induces a decrease of the percentages of renal transport for sodium, potassium and chloride and an increase of the urinary cGMP concentration. Also down-regulates the mRNA expression of natriuretic peptide receptor 1 (NPR1) in the kidneys whereas it up-regulates those of NPR2, NPR3 and guanylyl cyclase C (GUCY2C) mRNAs. May exhibit hypotensive and vasodepressor activities. The sequence is that of Natriuretic peptide TsNP from Tityus serrulatus (Brazilian scorpion).